Reading from the N-terminus, the 152-residue chain is Nucleoside diphosphate kinase A 1 (152 aa).

ATP contacts are provided by K12, F60, R88, T94, R105, and N115. H118 serves as the catalytic Pros-phosphohistidine intermediate.

Belongs to the NDK family. Homohexamer. Mg(2+) is required as a cofactor. In terms of processing, the N-terminus is blocked.

It is found in the cytoplasm. The protein localises to the cell membrane. It localises to the nucleus. The catalysed reaction is a 2'-deoxyribonucleoside 5'-diphosphate + ATP = a 2'-deoxyribonucleoside 5'-triphosphate + ADP. It catalyses the reaction a ribonucleoside 5'-diphosphate + ATP = a ribonucleoside 5'-triphosphate + ADP. With respect to regulation, autophosphorylation at His-118 increases serine/threonine protein kinase activity of the enzyme. Interaction with the SET complex inhibits exonuclease activity. Its function is as follows. Major role in the synthesis of nucleoside triphosphates other than ATP. Possesses nucleoside-diphosphate kinase, serine/threonine-specific protein kinase, geranyl and farnesyl pyrophosphate kinase, histidine protein kinase and 3'-5' exonuclease activities. Involved in cell proliferation, differentiation and development, signal transduction, G protein-coupled receptor endocytosis, and gene expression. Required for neural development including neural patterning and cell fate determination. In Bos taurus (Bovine), this protein is Nucleoside diphosphate kinase A 1 (NME1-1).